Consider the following 215-residue polypeptide: dITP/XTP pyrophosphatase (215 aa).

Residue 13-18 (THNIGK) participates in substrate binding. Residue Asp-74 is the Proton acceptor of the active site. Position 74 (Asp-74) interacts with Mg(2+). Substrate-binding positions include Ser-75, 163–166 (FGFD), Lys-186, and 199–200 (HR).

The protein belongs to the HAM1 NTPase family. Homodimer. The cofactor is Mg(2+).

The catalysed reaction is XTP + H2O = XMP + diphosphate + H(+). It carries out the reaction dITP + H2O = dIMP + diphosphate + H(+). It catalyses the reaction ITP + H2O = IMP + diphosphate + H(+). Functionally, pyrophosphatase that catalyzes the hydrolysis of nucleoside triphosphates to their monophosphate derivatives, with a high preference for the non-canonical purine nucleotides XTP (xanthosine triphosphate), dITP (deoxyinosine triphosphate) and ITP. Seems to function as a house-cleaning enzyme that removes non-canonical purine nucleotides from the nucleotide pool, thus preventing their incorporation into DNA/RNA and avoiding chromosomal lesions. In Bartonella henselae (strain ATCC 49882 / DSM 28221 / CCUG 30454 / Houston 1) (Rochalimaea henselae), this protein is dITP/XTP pyrophosphatase.